The following is a 300-amino-acid chain: Cation-efflux pump FieF (300 aa).

A helical membrane pass occupies residues 24–44 (LLIKIFAWWYTGSVSILAALV). Zn(2+)-binding residues include Asp45 and Asp49. Helical transmembrane passes span 82–102 (AALAQSMFISGSALFLFLTGI) and 114–134 (AGVGVVVTLIALVSTLALVTF). Residues His153 and Asp157 each coordinate Zn(2+). 2 consecutive transmembrane segments (helical) span residues 156 to 176 (SDVMMNGAILVALGLSWYGWH) and 178 to 198 (ADALFALGIGIYILYSALRMG).

It belongs to the cation diffusion facilitator (CDF) transporter (TC 2.A.4) family. FieF subfamily. Homodimer.

The protein localises to the cell inner membrane. The enzyme catalyses Zn(2+)(in) + H(+)(out) = Zn(2+)(out) + H(+)(in). It carries out the reaction Cd(2+)(in) + H(+)(out) = Cd(2+)(out) + H(+)(in). It catalyses the reaction Fe(2+)(in) + H(+)(out) = Fe(2+)(out) + H(+)(in). Its function is as follows. Divalent metal cation transporter which exports Zn(2+), Cd(2+) and possibly Fe(2+). May be involved in zinc and iron detoxification by efflux. The sequence is that of Cation-efflux pump FieF from Klebsiella pneumoniae subsp. pneumoniae (strain ATCC 700721 / MGH 78578).